Here is a 59-residue protein sequence, read N- to C-terminus: MAEDSVTILIVEDDDAYPSFGSLPASHAQYGFRLLRSIFLIMLVIWTAVWLKLLRDALL.

The helical transmembrane segment at 32–54 (FRLLRSIFLIMLVIWTAVWLKLL) threads the bilayer.

This sequence belongs to the HHV-5 UL2 protein family.

Its subcellular location is the host membrane. This is an uncharacterized protein from Human cytomegalovirus (strain Merlin) (HHV-5).